The primary structure comprises 231 residues: ATP phosphoribosyltransferase (231 aa).

It belongs to the ATP phosphoribosyltransferase family. Short subfamily. As to quaternary structure, heteromultimer composed of HisG and HisZ subunits.

The protein localises to the cytoplasm. It catalyses the reaction 1-(5-phospho-beta-D-ribosyl)-ATP + diphosphate = 5-phospho-alpha-D-ribose 1-diphosphate + ATP. Its pathway is amino-acid biosynthesis; L-histidine biosynthesis; L-histidine from 5-phospho-alpha-D-ribose 1-diphosphate: step 1/9. Catalyzes the condensation of ATP and 5-phosphoribose 1-diphosphate to form N'-(5'-phosphoribosyl)-ATP (PR-ATP). Has a crucial role in the pathway because the rate of histidine biosynthesis seems to be controlled primarily by regulation of HisG enzymatic activity. In Sinorhizobium fredii (strain NBRC 101917 / NGR234), this protein is ATP phosphoribosyltransferase (hisG).